Here is a 955-residue protein sequence, read N- to C-terminus: HAUS augmin-like complex subunit 6 (955 aa).

A coiled-coil region spans residues Q188–E219. S406 carries the post-translational modification Phosphoserine. Residues N474 to I495 form a disordered region. The segment covering L479–I495 has biased composition (basic and acidic residues). Phosphoserine is present on residues S507, S524, S530, S550, and S552. Residue T584 is modified to Phosphothreonine. 4 positions are modified to phosphoserine: S715, S728, S742, and S805. Residues F789 to E814 form a disordered region. T823 carries the post-translational modification Phosphothreonine. Positions R848–D876 are disordered. Phosphoserine is present on residues S908, S914, and S943.

This sequence belongs to the HAUS6 family. In terms of assembly, component of the HAUS augmin-like complex. The complex interacts with the gamma-tubulin ring complex and this interaction is required for spindle assembly. Interacts with PLK1, NEDD1 and gamma-tubulin. Interacts with EML3 (phosphorylated at 'Thr-881'). Phosphorylated during mitosis.

The protein resides in the cytoplasm. It localises to the cytoskeleton. The protein localises to the spindle. Its subcellular location is the microtubule organizing center. It is found in the centrosome. Contributes to mitotic spindle assembly, maintenance of centrosome integrity and completion of cytokinesis as part of the HAUS augmin-like complex. Promotes the nucleation of microtubules from the spindle through recruitment of NEDD1 and gamma-tubulin. The polypeptide is HAUS augmin-like complex subunit 6 (HAUS6) (Homo sapiens (Human)).